The primary structure comprises 397 residues: 3-ketoacyl-CoA thiolase, mitochondrial (397 aa).

The transit peptide at 1-16 (MALLRGVFVVAAKRTP) directs the protein to the mitochondrion; not cleaved. Residue Lys25 is modified to N6-acetyllysine; alternate. Position 25 is an N6-succinyllysine; alternate (Lys25). Position 45 is an N6-succinyllysine (Lys45). Cys92 functions as the Acyl-thioester intermediate in the catalytic mechanism. Position 119 is a phosphothreonine (Thr119). The residue at position 121 (Ser121) is a Phosphoserine. Tyr127 bears the Phosphotyrosine mark. At Thr136 the chain carries Phosphothreonine. The residue at position 137 (Lys137) is an N6-acetyllysine; alternate. Position 137 is an N6-succinyllysine; alternate (Lys137). Ser140 carries the post-translational modification Phosphoserine. N6-acetyllysine; alternate is present on residues Lys143, Lys171, Lys191, and Lys209. An N6-succinyllysine; alternate mark is found at Lys143, Lys171, Lys191, and Lys209. N6-succinyllysine occurs at positions 211, 212, and 214. CoA is bound by residues Arg224 and Thr227. Lys234 carries the N6-acetyllysine; alternate modification. At Lys234 the chain carries N6-succinyllysine; alternate. Lys240 carries the N6-succinyllysine modification. The residue at position 241 (Lys241) is an N6-acetyllysine. Residue Ser251 coordinates CoA. N6-acetyllysine occurs at positions 269 and 270. N6-acetyllysine; alternate is present on Lys305. Lys305 bears the N6-succinyllysine; alternate mark. A Phosphoserine modification is found at Ser310. Lys312 is modified (N6-acetyllysine; alternate). An N6-succinyllysine; alternate modification is found at Lys312. Phosphoserine is present on Ser333. Residues Lys340 and Lys375 each carry the N6-acetyllysine modification. Cys382 (proton donor/acceptor) is an active-site residue.

Belongs to the thiolase-like superfamily. Thiolase family. Homotetramer. Interacts with BNIP3.

The protein localises to the mitochondrion. It carries out the reaction an acyl-CoA + acetyl-CoA = a 3-oxoacyl-CoA + CoA. The enzyme catalyses 2 acetyl-CoA = acetoacetyl-CoA + CoA. It catalyses the reaction acetyl-CoA + H2O = acetate + CoA + H(+). The catalysed reaction is propanoyl-CoA + H2O = propanoate + CoA + H(+). It carries out the reaction butanoyl-CoA + H2O = butanoate + CoA + H(+). The enzyme catalyses hexanoyl-CoA + H2O = hexanoate + CoA + H(+). It catalyses the reaction octanoyl-CoA + H2O = octanoate + CoA + H(+). The catalysed reaction is decanoyl-CoA + H2O = decanoate + CoA + H(+). It carries out the reaction dodecanoyl-CoA + H2O = dodecanoate + CoA + H(+). The enzyme catalyses tetradecanoyl-CoA + H2O = tetradecanoate + CoA + H(+). It catalyses the reaction hexadecanoyl-CoA + H2O = hexadecanoate + CoA + H(+). It functions in the pathway lipid metabolism; fatty acid beta-oxidation. In terms of biological role, in the production of energy from fats, this is one of the enzymes that catalyzes the last step of the mitochondrial beta-oxidation pathway, an aerobic process breaking down fatty acids into acetyl-CoA. Using free coenzyme A/CoA, catalyzes the thiolytic cleavage of medium- to long-chain unbranched 3-oxoacyl-CoAs into acetyl-CoA and a fatty acyl-CoA shortened by two carbon atoms. Also catalyzes the condensation of two acetyl-CoA molecules into acetoacetyl-CoA and could be involved in the production of ketone bodies. Also displays hydrolase activity on various fatty acyl-CoAs. Thereby, could be responsible for the production of acetate in a side reaction to beta-oxidation. Abolishes BNIP3-mediated apoptosis and mitochondrial damage. In Homo sapiens (Human), this protein is 3-ketoacyl-CoA thiolase, mitochondrial (ACAA2).